A 283-amino-acid chain; its full sequence is Phosphate import ATP-binding protein PstB 1 (283 aa).

Residues 1-16 are compositionally biased toward acidic residues; sequence MSSDDTTDPTADDESF. The tract at residues 1-35 is disordered; that stretch reads MSSDDTTDPTADDESFTDSPVAGLEQSTTTRGSGR. Residues 38 to 278 form the ABC transporter domain; that stretch reads ISARNINVWY…PSSERVENYI (241 aa). Residue 70-77 participates in ATP binding; sequence GPSGCGKS.

This sequence belongs to the ABC transporter superfamily. Phosphate importer (TC 3.A.1.7) family. In terms of assembly, the complex is composed of two ATP-binding proteins (PstB), two transmembrane proteins (PstC and PstA) and a solute-binding protein (PstS).

The protein localises to the cell membrane. It catalyses the reaction phosphate(out) + ATP + H2O = ADP + 2 phosphate(in) + H(+). Part of the ABC transporter complex PstSACB involved in phosphate import. Responsible for energy coupling to the transport system. This is Phosphate import ATP-binding protein PstB 1 from Natronomonas pharaonis (strain ATCC 35678 / DSM 2160 / CIP 103997 / JCM 8858 / NBRC 14720 / NCIMB 2260 / Gabara) (Halobacterium pharaonis).